A 921-amino-acid chain; its full sequence is Sodium/calcium exchanger 2 (921 aa).

The signal sequence occupies residues 1–20 (MAPLALVGVTLLLAAPPCSG). Residues 21–68 (AATPTPSLPPPPANDSDTSTGGCQGSYRCQPGVLLPVWEPDDPSLGDK) are Extracellular-facing. Residues 22–42 (ATPTPSLPPPPANDSDTSTGG) are disordered. N-linked (GlcNAc...) asparagine glycosylation occurs at Asn-34. A helical membrane pass occupies residues 69-90 (AARAVVYFVAMVYMFLGVSIIA). At 91–130 (DRFMAAIEVITSKEKEITITKANGETSVGTVRIWNETVSN) the chain is on the cytoplasmic side. The chain crosses the membrane as a helical span at residues 131 to 152 (LTLMALGSSAPEILLSVIEVCG). One copy of the Alpha-1 repeat lies at 135-175 (ALGSSAPEILLSVIEVCGHNFQAGELGPGTIVGSAAFNMFV). Residues 153–164 (HNFQAGELGPGT) are Extracellular-facing. A helical transmembrane segment spans residues 165-185 (IVGSAAFNMFVVIAVCIYVIP). Topologically, residues 186 to 196 (AGESRKIKHLR) are cytoplasmic. The helical transmembrane segment at 197–219 (VFFVTASWSIFAYVWLYLILAVF) threads the bilayer. Over 220–222 (SPG) the chain is Extracellular. The chain crosses the membrane as a helical span at residues 223–246 (VVQVWEALLTLVFFPVCVVFAWMA). At 247–720 (DKRLLFYKYV…DGSREERLPS (474 aa)) the chain is on the cytoplasmic side. The interval 248–267 (KRLLFYKYVYKRYRTDPRSG) is putative calmodulin-binding region. Calx-beta domains lie at 384–483 (GAGE…VRLL) and 512–612 (ATVT…IELG). Residues Glu-407, Asp-443, Asp-468, Asp-469, Ile-471, Glu-473, Glu-476, Asp-518, Asp-519, Asp-520, Glu-536, Asp-598, Glu-599, and Glu-600 each coordinate Ca(2+). Ser-622 is subject to Phosphoserine. Residue Glu-665 participates in Ca(2+) binding. Residues 721–740 (CFDYVMHFLTVFWKVLFACV) traverse the membrane as a helical segment. Over 741 to 747 (PPTEYCH) the chain is Extracellular. The chain crosses the membrane as a helical span at residues 748–770 (GWACFGVSILVIGLLTALIGDLA). Over 771 to 772 (SH) the chain is Cytoplasmic. The helical transmembrane segment at 773 to 791 (FGCTVGLKDSVNAVVFVAL) threads the bilayer. One copy of the Alpha-2 repeat lies at 790–826 (ALGTSIPDTFASKVAALQDQCADASIGNVTGSNAVNV). Over 792–822 (GTSIPDTFASKVAALQDQCADASIGNVTGSN) the chain is Extracellular. Asn-817 is a glycosylation site (N-linked (GlcNAc...) asparagine). A helical membrane pass occupies residues 823–843 (AVNVFLGLGVAWSVAAVYWAV). Residues 844-854 (QGRPFEVRTGT) are Cytoplasmic-facing. A helical membrane pass occupies residues 855-875 (LAFSVTLFTVFAFVGIAVLLY). The Extracellular portion of the chain corresponds to 876-892 (RRRPHIGGELGGPRGPK). The helical transmembrane segment at 893–909 (LATTALFLGLWLLYILF) threads the bilayer. Residues 910–921 (ASLEAYCHIRGF) lie on the Cytoplasmic side of the membrane.

This sequence belongs to the Ca(2+):cation antiporter (CaCA) (TC 2.A.19) family. SLC8 subfamily.

The protein localises to the cell membrane. The protein resides in the basolateral cell membrane. It localises to the perikaryon. It is found in the cell projection. Its subcellular location is the dendrite. The protein localises to the dendritic spine. The enzyme catalyses Ca(2+)(in) + 3 Na(+)(out) = Ca(2+)(out) + 3 Na(+)(in). Its activity is regulated as follows. Calcium transport is down-regulated by Na(+) and stimulated by Ca(2+). Mediates the electrogenic exchange of Ca(2+) against Na(+) ions across the cell membrane, and thereby contributes to the regulation of cytoplasmic Ca(2+) levels and Ca(2+)-dependent cellular processes. Contributes to cellular Ca(2+) homeostasis in excitable cells. Contributes to the rapid decrease of cytoplasmic Ca(2+) levels back to baseline after neuronal activation, and thereby contributes to modulate synaptic plasticity, learning and memory. Plays a role in regulating urinary Ca(2+) and Na(+) excretion. This is Sodium/calcium exchanger 2 (SLC8A2) from Homo sapiens (Human).